The primary structure comprises 403 residues: MSSYLFTSESVSEGHPDKVADQISDAVLDAILVQDPRARVACETMVKTGVAIIAGEITTSAWVDLEALTRKVIVDIGYNSSDVGFDGATCGVLNLIGKQSPDINQGVDRKKAEEQGAGDQGLMFGYATNETDSYMPAAIHISHRLVEQQAKIRKKSNSPLPWLRPDAKAQITLRYEDGVASAIDAVVLSTQHDPGIKQKDLVEAVREEILKPVLPSKWLHKGTKFHINPTGKFVIGGPVGDCGLTGRKIIVDTYGGSARHGGGAFSGKDPSKVDRSASYAVRYVAKNVVAAGLADRCEVQVSYAIGVAEPISISVTTFGTGKVPDDKIEKLIRQHFDLRPYGIIKMLDLIHPIYQPSASYGHFGRKPREFAYTNSNGGRVVATAFSWEKIDKAEVLRADAKLK.

Histidine 15 contributes to the ATP binding site. Residue aspartate 17 coordinates Mg(2+). Glutamate 43 provides a ligand contact to K(+). Glutamate 56 and glutamine 99 together coordinate L-methionine. The segment at 99-109 (QSPDINQGVDR) is flexible loop. ATP contacts are provided by residues 166 to 168 (DAK), 232 to 233 (KF), aspartate 241, 247 to 248 (RK), alanine 264, and lysine 268. Position 241 (aspartate 241) interacts with L-methionine. An L-methionine-binding site is contributed by lysine 272.

This sequence belongs to the AdoMet synthase family. In terms of assembly, homotetramer; dimer of dimers. The cofactor is Mg(2+). K(+) serves as cofactor.

Its subcellular location is the cytoplasm. The enzyme catalyses L-methionine + ATP + H2O = S-adenosyl-L-methionine + phosphate + diphosphate. Its pathway is amino-acid biosynthesis; S-adenosyl-L-methionine biosynthesis; S-adenosyl-L-methionine from L-methionine: step 1/1. Catalyzes the formation of S-adenosylmethionine (AdoMet) from methionine and ATP. The overall synthetic reaction is composed of two sequential steps, AdoMet formation and the subsequent tripolyphosphate hydrolysis which occurs prior to release of AdoMet from the enzyme. This chain is S-adenosylmethionine synthase, found in Xylella fastidiosa (strain M12).